A 297-amino-acid chain; its full sequence is 4-diphosphocytidyl-2-C-methyl-D-erythritol kinase (297 aa).

Residues lysine 6 and aspartate 144 contribute to the active site.

This sequence belongs to the GHMP kinase family. IspE subfamily.

The enzyme catalyses 4-CDP-2-C-methyl-D-erythritol + ATP = 4-CDP-2-C-methyl-D-erythritol 2-phosphate + ADP + H(+). It functions in the pathway isoprenoid biosynthesis; isopentenyl diphosphate biosynthesis via DXP pathway; isopentenyl diphosphate from 1-deoxy-D-xylulose 5-phosphate: step 3/6. Catalyzes the phosphorylation of the position 2 hydroxy group of 4-diphosphocytidyl-2C-methyl-D-erythritol. The polypeptide is 4-diphosphocytidyl-2-C-methyl-D-erythritol kinase (Leptospira interrogans serogroup Icterohaemorrhagiae serovar Lai (strain 56601)).